The following is a 63-amino-acid chain: UPF0434 protein GDI0182/Gdia_2252 (63 aa).

It belongs to the UPF0434 family.

This Gluconacetobacter diazotrophicus (strain ATCC 49037 / DSM 5601 / CCUG 37298 / CIP 103539 / LMG 7603 / PAl5) protein is UPF0434 protein GDI0182/Gdia_2252.